The following is an 897-amino-acid chain: Coiled-coil domain-containing protein lobo (897 aa).

The disordered stretch occupies residues 27–49; sequence EIDEQRRSQGSESDFADEMEGEF. Residues 40–49 show a composition bias toward acidic residues; sequence DFADEMEGEF. Coiled coils occupy residues 269–306 and 801–858; these read DLKS…DLEL and SLLN…QRLT.

This sequence belongs to the DRC7 family. As to expression, testis-specific (at protein level).

It is found in the cell projection. The protein resides in the cilium. The protein localises to the flagellum. Its subcellular location is the cytoplasm. It localises to the cytoskeleton. It is found in the cilium axoneme. Functionally, key component of the nexin-dynein regulatory complex (N-DRC), essential for N-DRC integrity. Involved in the regulation of flagellar motility. Involved in sperm motility. Required for the sperm to enter in the coiled storage seminal receptacle (SR) tubule. The protein is Coiled-coil domain-containing protein lobo (lobo) of Drosophila melanogaster (Fruit fly).